A 719-amino-acid chain; its full sequence is Polyribonucleotide nucleotidyltransferase (719 aa).

The Mg(2+) site is built by Asp491 and Asp497. In terms of domain architecture, KH spans 558–617 (PRMLTIKINPEKIRDVIGKGGATIRALTEETGTQIDISDDGTIVIASVDETQAKEAQRRI). An S1 motif domain is found at 627-695 (GQIYDGSVLR…DKGRLRLSIK (69 aa)).

It belongs to the polyribonucleotide nucleotidyltransferase family. Mg(2+) is required as a cofactor.

It localises to the cytoplasm. It carries out the reaction RNA(n+1) + phosphate = RNA(n) + a ribonucleoside 5'-diphosphate. Functionally, involved in mRNA degradation. Catalyzes the phosphorolysis of single-stranded polyribonucleotides processively in the 3'- to 5'-direction. This chain is Polyribonucleotide nucleotidyltransferase, found in Bordetella bronchiseptica (strain ATCC BAA-588 / NCTC 13252 / RB50) (Alcaligenes bronchisepticus).